We begin with the raw amino-acid sequence, 394 residues long: 1-deoxy-D-xylulose 5-phosphate reductoisomerase (394 aa).

NADPH is bound by residues T13, G14, S15, V16, R40, Q41, and N127. A 1-deoxy-D-xylulose 5-phosphate-binding site is contributed by K128. E129 is an NADPH binding site. D153 contacts Mn(2+). 4 residues coordinate 1-deoxy-D-xylulose 5-phosphate: S154, E155, S184, and H207. A Mn(2+)-binding site is contributed by E155. An NADPH-binding site is contributed by G213. 1-deoxy-D-xylulose 5-phosphate contacts are provided by S220, N225, K226, and E229. E229 serves as a coordination point for Mn(2+).

It belongs to the DXR family. The cofactor is Mg(2+). Mn(2+) serves as cofactor.

It catalyses the reaction 2-C-methyl-D-erythritol 4-phosphate + NADP(+) = 1-deoxy-D-xylulose 5-phosphate + NADPH + H(+). It participates in isoprenoid biosynthesis; isopentenyl diphosphate biosynthesis via DXP pathway; isopentenyl diphosphate from 1-deoxy-D-xylulose 5-phosphate: step 1/6. Catalyzes the NADPH-dependent rearrangement and reduction of 1-deoxy-D-xylulose-5-phosphate (DXP) to 2-C-methyl-D-erythritol 4-phosphate (MEP). The protein is 1-deoxy-D-xylulose 5-phosphate reductoisomerase of Chromobacterium violaceum (strain ATCC 12472 / DSM 30191 / JCM 1249 / CCUG 213 / NBRC 12614 / NCIMB 9131 / NCTC 9757 / MK).